A 235-amino-acid chain; its full sequence is Small ribosomal subunit protein uS3 (235 aa).

One can recognise a KH type-2 domain in the interval 39–107; the sequence is VRKFLNKELA…PAQINIAEVK (69 aa). The interval 215 to 235 is disordered; sequence AQSEQQPADKPKKAPRGKGRK.

This sequence belongs to the universal ribosomal protein uS3 family. Part of the 30S ribosomal subunit. Forms a tight complex with proteins S10 and S14.

In terms of biological role, binds the lower part of the 30S subunit head. Binds mRNA in the 70S ribosome, positioning it for translation. This Haemophilus influenzae (strain ATCC 51907 / DSM 11121 / KW20 / Rd) protein is Small ribosomal subunit protein uS3.